The following is a 798-amino-acid chain: Type 2 DNA topoisomerase 6 subunit B (798 aa).

ATP-binding positions include Asn60, Asp91, 112-113, and 122-129; these read SR and GQQGIGIS. Basic and acidic residues predominate over residues 221-233; the sequence is EPEDSFKSERATE. Positions 221-245 are disordered; that stretch reads EPEDSFKSERATEELPPETEEIRPH. Lys629 is a binding site for ATP.

It belongs to the TOP6B family. In terms of assembly, homodimer. Heterotetramer of two Top6A and two Top6B chains.

The catalysed reaction is ATP-dependent breakage, passage and rejoining of double-stranded DNA.. Relaxes both positive and negative superturns and exhibits a strong decatenase activity. The protein is Type 2 DNA topoisomerase 6 subunit B of Natronomonas pharaonis (strain ATCC 35678 / DSM 2160 / CIP 103997 / JCM 8858 / NBRC 14720 / NCIMB 2260 / Gabara) (Halobacterium pharaonis).